A 205-amino-acid polypeptide reads, in one-letter code: Outer-membrane lipoprotein carrier protein (205 aa).

The N-terminal stretch at methionine 1–alanine 19 is a signal peptide.

It belongs to the LolA family. Monomer.

The protein localises to the periplasm. Its function is as follows. Participates in the translocation of lipoproteins from the inner membrane to the outer membrane. Only forms a complex with a lipoprotein if the residue after the N-terminal Cys is not an aspartate (The Asp acts as a targeting signal to indicate that the lipoprotein should stay in the inner membrane). The chain is Outer-membrane lipoprotein carrier protein from Francisella tularensis subsp. novicida (strain U112).